The following is a 76-amino-acid chain: Peptide ARACIN 1 (76 aa).

A signal peptide spans 1–22; that stretch reads MAMKTSHVLLLCLMFVIGFVEA. The propeptide at 23-35 is removed in mature form; the sequence is RRSDTGPDISTPP. Positions 36–38 match the SxS motif essential for MIK2 binding motif; sequence SGS. Residues 36–49 carry the SCOOP motif motif; it reads SGSCGASIAEFNSS. Residues 56–76 are disordered; sequence APPCRRPRLQNSEDVTHTTLP. Residues 64-76 show a composition bias toward polar residues; sequence LQNSEDVTHTTLP.

The protein belongs to the serine rich endogenous peptide (SCOOP) phytocytokine family. As to quaternary structure, interacts with MIK2 (via extracellular leucine-rich repeat domain); this interaction triggers the formation of complex between MIK2 and the BAK1/SERK3 and SERK4 coreceptors, and subsequent BAK1 activation by phosphorylation. Mainly expressed in young developing leaves, hydathodes, immature flowers and elongating pollen tubes.

It is found in the cell membrane. It localises to the secreted. Its subcellular location is the extracellular space. The protein localises to the apoplast. The protein resides in the endoplasmic reticulum. Functionally, brassicaceae-specific phytocytokine (plant endogenous peptide released into the apoplast) perceived by MIK2 in a BAK1/SERK3 and SERK4 coreceptors-dependent manner, that modulates various physiological and antimicrobial processes including growth prevention and reactive oxygen species (ROS) response regulation. Inhibits the fungal growth of Alternaria brassicicola, Sclerotinia sclerotiorum, Fusarium graminearum, yeast (Saccharomyces) and Botrytis cinerea, thus being an antimicrobial peptide (AMP). Promotes resistance to A.brassicicola and B.cinerea. The sequence is that of Peptide ARACIN 1 from Arabidopsis thaliana (Mouse-ear cress).